Reading from the N-terminus, the 454-residue chain is UDP-N-acetylmuramoylalanine--D-glutamate ligase (454 aa).

115 to 121 contributes to the ATP binding site; that stretch reads GTNGKTT.

It belongs to the MurCDEF family.

Its subcellular location is the cytoplasm. The catalysed reaction is UDP-N-acetyl-alpha-D-muramoyl-L-alanine + D-glutamate + ATP = UDP-N-acetyl-alpha-D-muramoyl-L-alanyl-D-glutamate + ADP + phosphate + H(+). The protein operates within cell wall biogenesis; peptidoglycan biosynthesis. Its function is as follows. Cell wall formation. Catalyzes the addition of glutamate to the nucleotide precursor UDP-N-acetylmuramoyl-L-alanine (UMA). The chain is UDP-N-acetylmuramoylalanine--D-glutamate ligase from Thermoanaerobacter sp. (strain X514).